Consider the following 157-residue polypeptide: ATP synthase subunit b', chloroplastic (157 aa).

Residues 26-43 (LMASQFLLIMLILDITFY) traverse the membrane as a helical segment.

Belongs to the ATPase B chain family. F-type ATPases have 2 components, F(1) - the catalytic core - and F(0) - the membrane proton channel. F(1) has five subunits: alpha(3), beta(3), gamma(1), delta(1), epsilon(1). F(0) has four main subunits: a(1), b(1), b'(1) and c(10-14). The alpha and beta chains form an alternating ring which encloses part of the gamma chain. F(1) is attached to F(0) by a central stalk formed by the gamma and epsilon chains, while a peripheral stalk is formed by the delta, b and b' chains.

Its subcellular location is the plastid. The protein resides in the chloroplast thylakoid membrane. Functionally, f(1)F(0) ATP synthase produces ATP from ADP in the presence of a proton or sodium gradient. F-type ATPases consist of two structural domains, F(1) containing the extramembraneous catalytic core and F(0) containing the membrane proton channel, linked together by a central stalk and a peripheral stalk. During catalysis, ATP synthesis in the catalytic domain of F(1) is coupled via a rotary mechanism of the central stalk subunits to proton translocation. In terms of biological role, component of the F(0) channel, it forms part of the peripheral stalk, linking F(1) to F(0). The b'-subunit is a diverged and duplicated form of b found in plants and photosynthetic bacteria. The polypeptide is ATP synthase subunit b', chloroplastic (Cyanidium caldarium (Red alga)).